Reading from the N-terminus, the 360-residue chain is DNA replication and repair protein RecF (360 aa).

Residue 30 to 37 (GQNGSGKT) participates in ATP binding.

This sequence belongs to the RecF family.

It is found in the cytoplasm. Functionally, the RecF protein is involved in DNA metabolism; it is required for DNA replication and normal SOS inducibility. RecF binds preferentially to single-stranded, linear DNA. It also seems to bind ATP. The protein is DNA replication and repair protein RecF of Shewanella sp. (strain W3-18-1).